We begin with the raw amino-acid sequence, 428 residues long: Putative zinc metalloprotease SA1105 (428 aa).

His-21 is a binding site for Zn(2+). Glu-22 is an active-site residue. His-25 provides a ligand contact to Zn(2+). Transmembrane regions (helical) follow at residues 172-194 (FLTL…IGLA), 309-331 (GSTL…GFSF), 352-374 (IISL…LIPI), and 401-420 (TTII…LVTW). The region spanning 186-269 (ALVLFIGLAY…TKSVELTPKK (84 aa)) is the PDZ domain.

The protein belongs to the peptidase M50B family. Requires Zn(2+) as cofactor.

It localises to the cell membrane. In Staphylococcus aureus (strain N315), this protein is Putative zinc metalloprotease SA1105.